A 299-amino-acid chain; its full sequence is Oxygen-dependent coproporphyrinogen-III oxidase (299 aa).

Ser92 provides a ligand contact to substrate. Mn(2+) contacts are provided by His96 and His106. His106 acts as the Proton donor in catalysis. 108 to 110 contributes to the substrate binding site; it reads NVR. Mn(2+) is bound by residues His145 and His175. The segment at 240–275 is important for dimerization; it reads YVEFNLVWDRGTLFGLQTGGRTESILMSMPPLVRWE. Residue 258–260 participates in substrate binding; that stretch reads GGR.

Belongs to the aerobic coproporphyrinogen-III oxidase family. In terms of assembly, homodimer. Requires Mn(2+) as cofactor.

It localises to the cytoplasm. The enzyme catalyses coproporphyrinogen III + O2 + 2 H(+) = protoporphyrinogen IX + 2 CO2 + 2 H2O. It functions in the pathway porphyrin-containing compound metabolism; protoporphyrin-IX biosynthesis; protoporphyrinogen-IX from coproporphyrinogen-III (O2 route): step 1/1. Involved in the heme biosynthesis. Catalyzes the aerobic oxidative decarboxylation of propionate groups of rings A and B of coproporphyrinogen-III to yield the vinyl groups in protoporphyrinogen-IX. This is Oxygen-dependent coproporphyrinogen-III oxidase from Escherichia coli O127:H6 (strain E2348/69 / EPEC).